We begin with the raw amino-acid sequence, 424 residues long: Mitogen-activated protein kinase 9 (424 aa).

The Protein kinase domain occupies 26-321 (YQQLKPIGSG…VDEALRHPYI (296 aa)). Residues 32–40 (IGSGAQGIV) and K55 contribute to the ATP site. D151 serves as the catalytic Proton acceptor. T183 carries the post-translational modification Phosphothreonine; by MAP2K7. Residues 183–185 (TPY) carry the TXY motif. Y185 bears the Phosphotyrosine; by MAP2K4 mark. The disordered stretch occupies residues 368 to 424 (KNGVVKDQPSDAAVSSNATPSQSSSINDISSMSTEQTLASDTDSSLDASTGPLEGCR). Residues 388-417 (SQSSSINDISSMSTEQTLASDTDSSLDAST) show a composition bias toward low complexity.

This sequence belongs to the protein kinase superfamily. CMGC Ser/Thr protein kinase family. MAP kinase subfamily. As to quaternary structure, interacts with MECOM. Interacts with DCLK2. Binds to at least four scaffolding proteins, MAPK8IP1/JIP-1, MAPK8IP2/JIP-2, MAPK8IP3/JIP-3/JSAP1 and SPAG9/MAPK8IP4/JIP-4. These proteins also bind other components of the JNK signaling pathway. Interacts with NFATC4. Interacts with ATF7; the interaction does not phosphorylate ATF7 but acts as a docking site for ATF7-associated partners such as JUN. Interacts with BCL10. Interacts with CTNNB1 and GSK3B. Interacts with MAPKBP1. Interacts with POU5F1; phosphorylates POU5F1 at 'Ser-355'. Found in a complex with SH3RF1, RAC2, MAP3K7/TAK1, MAP2K7/MKK7, MAPK8IP1/JIP1 and MAPK8/JNK1. It depends on Mg(2+) as a cofactor. In terms of processing, dually phosphorylated on Thr-183 and Tyr-185 by MAP2K7 and MAP2K4, which activates the enzyme. Autophosphorylated in vitro.

It is found in the cytoplasm. Its subcellular location is the nucleus. The enzyme catalyses L-seryl-[protein] + ATP = O-phospho-L-seryl-[protein] + ADP + H(+). It catalyses the reaction L-threonyl-[protein] + ATP = O-phospho-L-threonyl-[protein] + ADP + H(+). Its activity is regulated as follows. Activated by threonine and tyrosine phosphorylation by either of two dual specificity kinases, MAP2K4 and MAP2K7. MAP2K4 shows a strong preference for Tyr-185 while MAP2K7 phosphorylates Tyr-183 preferentially. Inhibited by dual specificity phosphatases, such as DUSP1. Functionally, serine/threonine-protein kinase involved in various processes such as cell proliferation, differentiation, migration, transformation and programmed cell death. Extracellular stimuli such as pro-inflammatory cytokines or physical stress stimulate the stress-activated protein kinase/c-Jun N-terminal kinase (SAP/JNK) signaling pathway. In this cascade, two dual specificity kinases MAP2K4/MKK4 and MAP2K7/MKK7 phosphorylate and activate MAPK9/JNK2. In turn, MAPK9/JNK2 phosphorylates a number of transcription factors, primarily components of AP-1 such as JUN and ATF2 and thus regulates AP-1 transcriptional activity. In response to oxidative or ribotoxic stresses, inhibits rRNA synthesis by phosphorylating and inactivating the RNA polymerase 1-specific transcription initiation factor RRN3. Promotes stressed cell apoptosis by phosphorylating key regulatory factors including TP53 and YAP1. In T-cells, MAPK8 and MAPK9 are required for polarized differentiation of T-helper cells into Th1 cells. Upon T-cell receptor (TCR) stimulation, is activated by CARMA1, BCL10, MAP2K7 and MAP3K7/TAK1 to regulate JUN protein levels. Plays an important role in the osmotic stress-induced epithelial tight-junctions disruption. When activated, promotes beta-catenin/CTNNB1 degradation and inhibits the canonical Wnt signaling pathway. Also participates in neurite growth in spiral ganglion neurons. Phosphorylates the CLOCK-BMAL1 heterodimer and plays a role in the regulation of the circadian clock. Phosphorylates POU5F1, which results in the inhibition of POU5F1's transcriptional activity and enhances its proteasomal degradation. Phosphorylates ALKBH5 in response to reactive oxygen species (ROS), promoting ALKBH5 sumoylation and inactivation. In terms of biological role, MAPK9 isoforms display different binding patterns: alpha-1 and alpha-2 preferentially bind to JUN, whereas beta-1 and beta-2 bind to ATF2. However, there is no correlation between binding and phosphorylation, which is achieved at about the same efficiency by all isoforms. JUNB is not a substrate for JNK2 alpha-2, and JUND binds only weakly to it. The chain is Mitogen-activated protein kinase 9 (MAPK9) from Homo sapiens (Human).